A 354-amino-acid chain; its full sequence is Guanine nucleotide-binding protein G(o) subunit alpha (354 aa).

Residue Gly2 is the site of N-myristoyl glycine attachment. Cys3 carries the S-palmitoyl cysteine lipid modification. Residues 32–354 form the G-alpha domain; the sequence is KDIKLLLLGA…ANNLRGCGLY (323 aa). The G1 motif stretch occupies residues 35–48; the sequence is KLLLLGAGESGKST. Residues 40 to 47, 176 to 182, 201 to 205, 270 to 273, and Ala326 contribute to the GTP site; these read GAGESGKS, LRTRVKT, DVGGQ, and NKKD. Positions 47 and 182 each coordinate Mg(2+). The tract at residues 174 to 182 is G2 motif; that stretch reads DILRTRVKT. A G3 motif region spans residues 197–206; it reads FKLFDVGGQR. Residues 266-273 are G4 motif; the sequence is ILFLNKKD. A G5 motif region spans residues 324-329; sequence TCATDT.

It belongs to the G-alpha family. G(i/o/t/z) subfamily. G proteins are composed of 3 units; alpha, beta and gamma. The alpha chain contains the guanine nucleotide binding site. Interacts (in GDP-bound form) with gpr-1; gpr-1 forms a complex with gpr-2 and lin-5. Interacts (in GDP-bound form) with gpb-1. Interacts (in GDP-bound form) with gbas-1 (via GBA motif); the interaction leads to activation of goa-1. As to expression, expressed in the ASER neuron and the intestine.

Functionally, guanine nucleotide-binding proteins (G proteins) are involved as modulators or transducers in various transmembrane signaling systems. In the 1-cell embryo, probably together with gpa-16, controls nuclear rotation and spindle elongation during mitosis. During the first embryonic cell divisions, plays a role in gpr-1/2 cortical localization and in the proper orientation of EMS blastomere mitotic spindle. Polarity determinants (par genes) may regulate lin-5/gpr-1/gpr-2/goa-1 locally to create the asymmetric forces that drive spindle movement. Involved in chemosensory responses to attractive and repellent odors detected by AWC and AWB sensory neurons, respectively. In ASER neurons, acts downstream of glr-3 to regulate cold avoidance behavior via calcium signaling, and it may also play a role in sensing cold in the intestine. Negatively regulates axon regeneration after injury downstream of the inhibitory compound arachidonoyl ethanolamide (AEA) by antagonizing the activation of the JNK pathway (mlk-1/mek-1/kgb-1). In neurons, may negatively regulate diacylglycerol (DAG) production mediated by egl-30 signaling cascade and thereby negatively regulates acetylcholine release. Couples to the muscarinic acetylcholine receptor gar-2 to negatively regulate cholinergic receptor activity in the presence of high levels of acetylcholine in ventral cord motor neurons. Plays a role in the navigational capacity of sperm and the targeting of sperm derived from males to the fertilization site in the uterus of hermaphrodites. Involved in egg-laying and in regulating dopamine-mediated locomotion. Most likely couples to the dopamine receptors dop-2 and dop-3 to positively regulate the dopamine-mediated suppression of crh-1/CREB1 transcription factor activation in cholinergic SIA neurons in the presence of food. The sequence is that of Guanine nucleotide-binding protein G(o) subunit alpha from Caenorhabditis elegans.